The following is a 451-amino-acid chain: Tubulin beta-1 chain (451 aa).

Positions 1-4 match the MREI motif motif; it reads MREI. Residues glutamine 11, glutamate 69, serine 138, glycine 142, threonine 143, and glycine 144 each contribute to the GTP site. Glutamate 69 contributes to the Mg(2+) binding site. Serine 172 is modified (phosphoserine; by CDK1). Residues asparagine 204 and asparagine 226 each contribute to the GTP site. Residues 432 to 451 form a disordered region; sequence LEEDEEVTEEAEMEPEDKGH. Acidic residues predominate over residues 433–451; that stretch reads EEDEEVTEEAEMEPEDKGH. 5-glutamyl polyglutamate is present on glutamate 440.

It belongs to the tubulin family. In terms of assembly, dimer of alpha and beta chains. A typical microtubule is a hollow water-filled tube with an outer diameter of 25 nm and an inner diameter of 15 nM. Alpha-beta heterodimers associate head-to-tail to form protofilaments running lengthwise along the microtubule wall with the beta-tubulin subunit facing the microtubule plus end conferring a structural polarity. Microtubules usually have 13 protofilaments but different protofilament numbers can be found in some organisms and specialized cells. Interacts with RANBP10. Mg(2+) is required as a cofactor. Some glutamate residues at the C-terminus are polyglutamylated, resulting in polyglutamate chains on the gamma-carboxyl group. Polyglutamylation plays a key role in microtubule severing by spastin (SPAST). SPAST preferentially recognizes and acts on microtubules decorated with short polyglutamate tails: severing activity by SPAST increases as the number of glutamates per tubulin rises from one to eight, but decreases beyond this glutamylation threshold. Glutamylation is also involved in cilia motility. Post-translationally, some glutamate residues at the C-terminus are monoglycylated but not polyglycylated due to the absence of functional TTLL10 in human. Monoglycylation is mainly limited to tubulin incorporated into cilia and flagella axonemes, which is required for their stability and maintenance. Flagella glycylation controls sperm motility. Both polyglutamylation and monoglycylation can coexist on the same protein on adjacent residues, and lowering glycylation levels increases polyglutamylation, and reciprocally. In terms of processing, phosphorylated on Ser-172 by CDK1 during the cell cycle, from metaphase to telophase, but not in interphase. This phosphorylation inhibits tubulin incorporation into microtubules. As to expression, hematopoietic cell-specific. Major isotype in leukocytes, where it represents 50% of all beta-tubulins.

It localises to the cytoplasm. The protein localises to the cytoskeleton. Tubulin is the major constituent of microtubules, a cylinder consisting of laterally associated linear protofilaments composed of alpha- and beta-tubulin heterodimers. Microtubules grow by the addition of GTP-tubulin dimers to the microtubule end, where a stabilizing cap forms. Below the cap, tubulin dimers are in GDP-bound state, owing to GTPase activity of alpha-tubulin. This is Tubulin beta-1 chain (TUBB1) from Homo sapiens (Human).